Here is a 240-residue protein sequence, read N- to C-terminus: MGKAQPLPILITGGGRRIGLALAWHFINQKQPVIVSYRTHYPAIDGLIKAGAQCIQADFSTNDGVMAFADEVLKSPHGLRAILHNASAWMAEKPGAPLADVLACMMQIHVNTPYLLNHALERLLRGHGHAASDIIHFTDYVVERGSDKHIAYAASKAALDNMTRSFARKLAPEVKVNSIAPSLILFNEHDDAEYRQQALNKSLMKTAPGEKEVIDLVDYLLTSCFVTGRSFPLDGGRHLR.

Catalysis depends on tyrosine 152, which acts as the Proton acceptor.

This sequence belongs to the short-chain dehydrogenases/reductases (SDR) family. FolM subfamily.

The enzyme catalyses (6S)-5,6,7,8-tetrahydrofolate + NADP(+) = 7,8-dihydrofolate + NADPH + H(+). The catalysed reaction is 7,8-dihydromonapterin + NADPH + H(+) = 5,6,7,8-tetrahydromonapterin + NADP(+). Its function is as follows. Catalyzes the reduction of dihydromonapterin to tetrahydromonapterin. Also has lower activity with dihydrofolate. This is Dihydromonapterin reductase (folM) from Shigella sonnei (strain Ss046).